Reading from the N-terminus, the 378-residue chain is Glutamate 5-kinase (378 aa).

Lys-17 is an ATP binding site. Substrate contacts are provided by Ser-58, Asp-145, and Asn-157. Residues 177–178 and 221–227 contribute to the ATP site; these read TD and TGGMMTK. One can recognise a PUA domain in the interval 286–364; that stretch reads VGKLYLDSGA…KEIPTILGYV (79 aa).

It belongs to the glutamate 5-kinase family.

Its subcellular location is the cytoplasm. It catalyses the reaction L-glutamate + ATP = L-glutamyl 5-phosphate + ADP. It functions in the pathway amino-acid biosynthesis; L-proline biosynthesis; L-glutamate 5-semialdehyde from L-glutamate: step 1/2. In terms of biological role, catalyzes the transfer of a phosphate group to glutamate to form L-glutamate 5-phosphate. In Nostoc sp. (strain PCC 7120 / SAG 25.82 / UTEX 2576), this protein is Glutamate 5-kinase.